A 94-amino-acid chain; its full sequence is Venom peptide SjAPI (94 aa).

The N-terminal stretch at 1–24 (MKWGALLCIFGFLAFCSVLDRGLG) is a signal peptide. Residues 25–30 (WIPDIW) constitute a propeptide that is removed on maturation. Cystine bridges form between cysteine 33–cysteine 70, cysteine 43–cysteine 66, cysteine 47–cysteine 62, cysteine 51–cysteine 92, and cysteine 72–cysteine 86. The 60-residue stretch at 33–92 (CSSKNEEFQQCGSSCPETCANHKNPEPKSCAAVCFVGCVCKPGFIRDDLKGSICVKPEDC) folds into the TIL domain. A protease binding loop region spans residues 63–65 (AAV).

This sequence belongs to the serine protease inhibitor-like (TIL domain-containing) family. In terms of tissue distribution, expressed by the venom gland.

The protein localises to the secreted. Functionally, recombinant protein inhibits both alpha-chymotrypsin (Ki=97.1 nM) and elastase (Ki=3700 nM). The chain is Venom peptide SjAPI from Scorpiops jendeki (Scorpion).